Here is a 361-residue protein sequence, read N- to C-terminus: Trans-2,3-enoyl-CoA reductase-like (361 aa).

Residues serine 33 and serine 35 each carry the phosphoserine modification. 4 helical membrane passes run 139–159 (VGWTTVFLAEYSGPLLIYLLF), 181–201 (VHLAFFCHCIHYIRLLLETLF), 215–235 (LIKGCAFYWGFTSWMAYYINH), and 309–329 (ISFTVMTQTLPVGIFTILMTI).

The protein belongs to the steroid 5-alpha reductase family. In terms of tissue distribution, expression is highest in the heart with very low to almost undetectable levels in brain, skeletal muscle, stomach, pancreas, liver, kidney, small intestine, and uterus.

The protein resides in the membrane. It localises to the endoplasmic reticulum. This Mus musculus (Mouse) protein is Trans-2,3-enoyl-CoA reductase-like (Tecrl).